The chain runs to 334 residues: Biotin synthase (334 aa).

One can recognise a Radical SAM core domain in the interval 48–275; it reads NQVQTSQLLS…RSMVRLSAGR (228 aa). Residues Cys-63, Cys-67, and Cys-70 each contribute to the [4Fe-4S] cluster site. [2Fe-2S] cluster-binding residues include Cys-107, Cys-138, Cys-198, and Arg-270.

This sequence belongs to the radical SAM superfamily. Biotin synthase family. In terms of assembly, homodimer. The cofactor is [4Fe-4S] cluster. Requires [2Fe-2S] cluster as cofactor.

The enzyme catalyses (4R,5S)-dethiobiotin + (sulfur carrier)-SH + 2 reduced [2Fe-2S]-[ferredoxin] + 2 S-adenosyl-L-methionine = (sulfur carrier)-H + biotin + 2 5'-deoxyadenosine + 2 L-methionine + 2 oxidized [2Fe-2S]-[ferredoxin]. It functions in the pathway cofactor biosynthesis; biotin biosynthesis; biotin from 7,8-diaminononanoate: step 2/2. In terms of biological role, catalyzes the conversion of dethiobiotin (DTB) to biotin by the insertion of a sulfur atom into dethiobiotin via a radical-based mechanism. The chain is Biotin synthase from Maricaulis maris (strain MCS10) (Caulobacter maris).